Reading from the N-terminus, the 304-residue chain is UDP-N-acetylenolpyruvoylglucosamine reductase (304 aa).

The FAD-binding PCMH-type domain occupies 33–198; that stretch reads KVGGPVDILL…LEVTFNLEKG (166 aa). Arg-177 is a catalytic residue. Ser-227 (proton donor) is an active-site residue. The active site involves Glu-297.

The protein belongs to the MurB family. The cofactor is FAD.

It is found in the cytoplasm. The catalysed reaction is UDP-N-acetyl-alpha-D-muramate + NADP(+) = UDP-N-acetyl-3-O-(1-carboxyvinyl)-alpha-D-glucosamine + NADPH + H(+). The protein operates within cell wall biogenesis; peptidoglycan biosynthesis. In terms of biological role, cell wall formation. The chain is UDP-N-acetylenolpyruvoylglucosamine reductase from Clostridium kluyveri (strain NBRC 12016).